The primary structure comprises 158 residues: 2-C-methyl-D-erythritol 2,4-cyclodiphosphate synthase (158 aa).

The a divalent metal cation site is built by Asp-8 and His-10. Residues 8–10 (DVH) and 34–35 (HS) contribute to the 4-CDP-2-C-methyl-D-erythritol 2-phosphate site. Residue His-42 participates in a divalent metal cation binding. Residues 56-58 (DIG), 61-65 (FPDTD), 100-106 (AQKPKML), 132-135 (TTEE), and Phe-139 each bind 4-CDP-2-C-methyl-D-erythritol 2-phosphate.

It belongs to the IspF family. In terms of assembly, homotrimer. It depends on a divalent metal cation as a cofactor.

The catalysed reaction is 4-CDP-2-C-methyl-D-erythritol 2-phosphate = 2-C-methyl-D-erythritol 2,4-cyclic diphosphate + CMP. It participates in isoprenoid biosynthesis; isopentenyl diphosphate biosynthesis via DXP pathway; isopentenyl diphosphate from 1-deoxy-D-xylulose 5-phosphate: step 4/6. Its function is as follows. Involved in the biosynthesis of isopentenyl diphosphate (IPP) and dimethylallyl diphosphate (DMAPP), two major building blocks of isoprenoid compounds. Catalyzes the conversion of 4-diphosphocytidyl-2-C-methyl-D-erythritol 2-phosphate (CDP-ME2P) to 2-C-methyl-D-erythritol 2,4-cyclodiphosphate (ME-CPP) with a corresponding release of cytidine 5-monophosphate (CMP). The polypeptide is 2-C-methyl-D-erythritol 2,4-cyclodiphosphate synthase (Clostridium beijerinckii (strain ATCC 51743 / NCIMB 8052) (Clostridium acetobutylicum)).